We begin with the raw amino-acid sequence, 599 residues long: Elongation factor 4 (599 aa).

In terms of domain architecture, tr-type G spans 4 to 186 (SKIRNFSIIA…SIVEKVPAPK (183 aa)). GTP is bound by residues 16–21 (DHGKST) and 133–136 (NKVD).

This sequence belongs to the TRAFAC class translation factor GTPase superfamily. Classic translation factor GTPase family. LepA subfamily.

The protein resides in the cell inner membrane. It carries out the reaction GTP + H2O = GDP + phosphate + H(+). Required for accurate and efficient protein synthesis under certain stress conditions. May act as a fidelity factor of the translation reaction, by catalyzing a one-codon backward translocation of tRNAs on improperly translocated ribosomes. Back-translocation proceeds from a post-translocation (POST) complex to a pre-translocation (PRE) complex, thus giving elongation factor G a second chance to translocate the tRNAs correctly. Binds to ribosomes in a GTP-dependent manner. This is Elongation factor 4 from Syntrophotalea carbinolica (strain DSM 2380 / NBRC 103641 / GraBd1) (Pelobacter carbinolicus).